Here is a 60-residue protein sequence, read N- to C-terminus: Large ribosomal subunit protein bL32 (60 aa).

The protein belongs to the bacterial ribosomal protein bL32 family.

The chain is Large ribosomal subunit protein bL32 from Persephonella marina (strain DSM 14350 / EX-H1).